A 333-amino-acid chain; its full sequence is Cell division protein ZipA (333 aa).

Residues 1 to 5 (MQELR) lie on the Periplasmic side of the membrane. A helical transmembrane segment spans residues 6-26 (LVLILVGALAIAALLFHGLWT). Residues 27–333 (SRKETSSKFG…KQRVKVFCRK (307 aa)) lie on the Cytoplasmic side of the membrane. Residues 72-81 (KEPAFAREEV) show a composition bias toward basic and acidic residues. Residues 72–119 (KEPAFAREEVPTSDDPLFEGTVSSESNKFTQQEKPTVQQAQPQPQPQP) form a disordered region. Residues 92–107 (TVSSESNKFTQQEKPT) show a composition bias toward polar residues. Residues 108–119 (VQQAQPQPQPQP) show a composition bias toward low complexity.

This sequence belongs to the ZipA family. In terms of assembly, interacts with FtsZ via their C-terminal domains.

The protein localises to the cell inner membrane. Its function is as follows. Essential cell division protein that stabilizes the FtsZ protofilaments by cross-linking them and that serves as a cytoplasmic membrane anchor for the Z ring. Also required for the recruitment to the septal ring of downstream cell division proteins. The sequence is that of Cell division protein ZipA from Aliivibrio fischeri (strain ATCC 700601 / ES114) (Vibrio fischeri).